Reading from the N-terminus, the 119-residue chain is Large ribosomal subunit protein bL20 (119 aa).

Belongs to the bacterial ribosomal protein bL20 family.

Binds directly to 23S ribosomal RNA and is necessary for the in vitro assembly process of the 50S ribosomal subunit. It is not involved in the protein synthesizing functions of that subunit. The chain is Large ribosomal subunit protein bL20 from Bordetella petrii (strain ATCC BAA-461 / DSM 12804 / CCUG 43448).